We begin with the raw amino-acid sequence, 230 residues long: Type II restriction enzyme Eco47I (230 aa).

The catalysed reaction is Endonucleolytic cleavage of DNA to give specific double-stranded fragments with terminal 5'-phosphates.. A P subtype restriction enzyme that recognizes the double-stranded sequence 5'-GGWCC-3' and cleaves after G-1. The sequence is that of Type II restriction enzyme Eco47I from Escherichia coli.